Here is a 507-residue protein sequence, read N- to C-terminus: E3 ubiquitin-protein ligase TRIM31 (507 aa).

The RING-type zinc finger occupies 16 to 56 (CPICMEILQDPVTIDCGHNFCLQCISQVGKTSEKIQCPLCK). The segment at 89–130 (KEDSRCQRHKEKLHYFCEQDGAFLCVVCRDSKDHKSHNVTLI) adopts a B box-type zinc-finger fold. Residues Cys94, His97, Cys116, and His122 each coordinate Zn(2+). Coiled coils occupy residues 176 to 241 (EKLK…LQSS) and 269 to 298 (EDLEKKCSEAKARHESIIKTLTELKDDMNA). A B30.2/SPRY domain is found at 315–507 (EKESWSLLQK…VACSHITLSP (193 aa)).

Belongs to the TRIM/RBCC family. May form oligomers. Interacts with isoform p52shc of SHC1. Post-translationally, auto-ubiquitinated (in vitro). Highly expressed in the gastrointestrinal tract, with high expression in the small intestine, moderate in the large intestine and weak in the stomach and esophagus.

Its subcellular location is the cytoplasm. The protein localises to the mitochondrion. It carries out the reaction S-ubiquitinyl-[E2 ubiquitin-conjugating enzyme]-L-cysteine + [acceptor protein]-L-lysine = [E2 ubiquitin-conjugating enzyme]-L-cysteine + N(6)-ubiquitinyl-[acceptor protein]-L-lysine.. It functions in the pathway protein modification; protein ubiquitination. Functionally, E3 ubiquitin-protein ligase that acts as a regulator of antiviral immune response and inflammation by mediating ubiquitination of substrates. Acts as a regulator of innate immune defense against viruses by mediating 'Lys-63'-linked ubiquitination of MAVS, promoting MAVS polymerization and formation of three-stranded helical filaments on mitochondria. Acts as a negative regulator of the NLRP3 inflammasome by catalyzing 'Lys-48'-linked ubiquitination of NLRP3, leading to its degradation. Regulator of Src-induced anchorage independent cell growth. This Mus musculus (Mouse) protein is E3 ubiquitin-protein ligase TRIM31.